The following is a 358-amino-acid chain: Peptide chain release factor 1 (358 aa).

N5-methylglutamine is present on Gln-233.

The protein belongs to the prokaryotic/mitochondrial release factor family. Post-translationally, methylated by PrmC. Methylation increases the termination efficiency of RF1.

It localises to the cytoplasm. Peptide chain release factor 1 directs the termination of translation in response to the peptide chain termination codons UAG and UAA. The polypeptide is Peptide chain release factor 1 (Clostridium botulinum (strain Loch Maree / Type A3)).